The primary structure comprises 170 residues: NADH-quinone oxidoreductase subunit B (170 aa).

[4Fe-4S] cluster is bound by residues cysteine 37, cysteine 38, cysteine 102, and cysteine 131.

The protein belongs to the complex I 20 kDa subunit family. As to quaternary structure, NDH-1 is composed of 14 different subunits. Subunits NuoB, C, D, E, F, and G constitute the peripheral sector of the complex. [4Fe-4S] cluster is required as a cofactor.

It localises to the cell inner membrane. The catalysed reaction is a quinone + NADH + 5 H(+)(in) = a quinol + NAD(+) + 4 H(+)(out). NDH-1 shuttles electrons from NADH, via FMN and iron-sulfur (Fe-S) centers, to quinones in the respiratory chain. The immediate electron acceptor for the enzyme in this species is believed to be ubiquinone. Couples the redox reaction to proton translocation (for every two electrons transferred, four hydrogen ions are translocated across the cytoplasmic membrane), and thus conserves the redox energy in a proton gradient. This is NADH-quinone oxidoreductase subunit B from Citrifermentans bemidjiense (strain ATCC BAA-1014 / DSM 16622 / JCM 12645 / Bem) (Geobacter bemidjiensis).